We begin with the raw amino-acid sequence, 368 residues long: Protein-glutamate methylesterase/protein-glutamine glutaminase (368 aa).

The Response regulatory domain maps to 9-126; it reads RVLVVDDSAF…SINMRELKDE (118 aa). At Asp-60 the chain carries 4-aspartylphosphate. The region spanning 161–354 is the CheB-type methylesterase domain; that stretch reads SVPARIAVAI…ETVVRAVEMI (194 aa). Catalysis depends on residues Ser-173, His-200, and Asp-296.

This sequence belongs to the CheB family. In terms of processing, phosphorylated by CheA. Phosphorylation of the N-terminal regulatory domain activates the methylesterase activity.

The protein resides in the cytoplasm. It carries out the reaction [protein]-L-glutamate 5-O-methyl ester + H2O = L-glutamyl-[protein] + methanol + H(+). It catalyses the reaction L-glutaminyl-[protein] + H2O = L-glutamyl-[protein] + NH4(+). In terms of biological role, involved in chemotaxis. Part of a chemotaxis signal transduction system that modulates chemotaxis in response to various stimuli. Catalyzes the demethylation of specific methylglutamate residues introduced into the chemoreceptors (methyl-accepting chemotaxis proteins or MCP) by CheR. Also mediates the irreversible deamidation of specific glutamine residues to glutamic acid. The sequence is that of Protein-glutamate methylesterase/protein-glutamine glutaminase from Pyrococcus abyssi (strain GE5 / Orsay).